A 265-amino-acid chain; its full sequence is V0 assembly protein 1 (265 aa).

The first 24 residues, methionine 1–alanine 24, serve as a signal peptide directing secretion. Residues aspartate 25–leucine 223 are Vacuolar-facing. N-linked (GlcNAc...) asparagine glycosylation is found at asparagine 69, asparagine 104, and asparagine 172. A helical membrane pass occupies residues leucine 224–isoleucine 244. The Cytoplasmic portion of the chain corresponds to serine 245–asparagine 265. The ER retention motif motif lies at lysine 262–asparagine 265.

It belongs to the VOA1 family. In terms of assembly, V-ATPase is a heteromultimeric enzyme composed of a peripheral catalytic V1 complex (components A to H) attached to an integral membrane V0 proton pore complex (components: a, c, c', c'', d, e, f and VOA1). Interacts with VMA21. Associates with the assembling V0 complex.

The protein localises to the vacuole membrane. Its subcellular location is the endoplasmic reticulum membrane. Functionally, accessory component of the V0 complex of vacuolar(H+)-ATPase (V-ATPase), a multisubunit enzyme composed of a peripheral complex (V1) that hydrolyzes ATP and a membrane integral complex (V0) that translocates protons. V-ATPase is responsible for acidifying and maintaining the pH of intracellular compartments. Functions with VMA21 in assembly of the V0 complex. This chain is V0 assembly protein 1 (VOA1), found in Saccharomyces cerevisiae (strain ATCC 204508 / S288c) (Baker's yeast).